The primary structure comprises 503 residues: Arabinose import ATP-binding protein AraG (503 aa).

ABC transporter domains follow at residues 5-240 (LRFD…MVGR) and 253-497 (LGDV…LPQG). Residue 37–44 (GENGAGKS) participates in ATP binding.

It belongs to the ABC transporter superfamily. Arabinose importer (TC 3.A.1.2.2) family. As to quaternary structure, the complex is composed of two ATP-binding proteins (AraG), two transmembrane proteins (AraH) and a solute-binding protein (AraF).

The protein localises to the cell inner membrane. It catalyses the reaction L-arabinose(out) + ATP + H2O = L-arabinose(in) + ADP + phosphate + H(+). In terms of biological role, part of the ABC transporter complex AraFGH involved in arabinose import. Responsible for energy coupling to the transport system. The protein is Arabinose import ATP-binding protein AraG of Burkholderia pseudomallei (strain K96243).